The following is a 234-amino-acid chain: Large ribosomal subunit protein uL1 (234 aa).

The protein belongs to the universal ribosomal protein uL1 family. In terms of assembly, part of the 50S ribosomal subunit.

Its function is as follows. Binds directly to 23S rRNA. The L1 stalk is quite mobile in the ribosome, and is involved in E site tRNA release. In terms of biological role, protein L1 is also a translational repressor protein, it controls the translation of the L11 operon by binding to its mRNA. This chain is Large ribosomal subunit protein uL1, found in Desulfosudis oleivorans (strain DSM 6200 / JCM 39069 / Hxd3) (Desulfococcus oleovorans).